A 314-amino-acid chain; its full sequence is Small ribosomal subunit protein uS2c (314 aa).

It belongs to the universal ribosomal protein uS2 family.

It localises to the plastid. The protein localises to the chloroplast. The protein is Small ribosomal subunit protein uS2c (rps2) of Stigeoclonium helveticum (Green alga).